Reading from the N-terminus, the 263-residue chain is Interleukin-33 (263 aa).

A compositionally biased stretch (polar residues) spans 1–17; sequence MKYSTTKIPPAKMNSSA. A disordered region spans residues 1–28; sequence MKYSTTKIPPAKMNSSADKALVKSPKLR. A homeodomain-like HTH domain region spans residues 1-65; sequence MKYSTTKIPP…CYFRKEITKR (65 aa). The segment at 62 to 103 is interaction with RELA; sequence ITKRYSPRTAEKCRKQCLVFTACHQQLNKDFTSDVPMLQKCF.

Belongs to the IL-1 family. Highly divergent. As to quaternary structure, forms a 1:1:1 heterotrimeric complex with its primary high-affinity receptor IL1RL1 and the coreceptor IL1RAP. Interacts with cargo receptor TMED10; the interaction mediates the translocation from the cytoplasm into the ERGIC (endoplasmic reticulum-Golgi intermediate compartment) and thereby secretion. The full-length protein can be released from cells and is able to signal via the IL1RL1/ST2 receptor. However, proteolytic processing by CELA1, CSTG/cathepsin G and ELANE/neutrophil elastase produces C-terminal peptides that are more active than the unprocessed full-length protein. May also be proteolytically processed by calpains. Proteolytic cleavage mediated by apoptotic caspases including CASP3 and CASP7 results in IL33 inactivation. In vitro proteolytic cleavage by CASP1 was reported but could not be confirmed in vivo suggesting that IL33 is probably not a direct substrate for that caspase. As to expression, expressed in cultured umbilical artery smooth muscle cells after stimulation with IL1A and IL1B, and to a lesser extent with IFNG. Expressed in vasospastic cerebral arteries after subarachnoid hemorrhage.

It localises to the nucleus. Its subcellular location is the chromosome. The protein localises to the cytoplasm. The protein resides in the cytoplasmic vesicle. It is found in the secretory vesicle. It localises to the secreted. Its function is as follows. Cytokine that binds to and signals through the IL1RL1/ST2 receptor which in turn activates NF-kappa-B and MAPK signaling pathways in target cells. Involved in the maturation of Th2 cells inducing the secretion of T-helper type 2-associated cytokines. Also involved in activation of mast cells, basophils, eosinophils and natural killer cells. Acts as a chemoattractant for Th2 cells, and may function as an 'alarmin', that amplifies immune responses during tissue injury. Induces rapid UCP2-dependent mitochondrial rewiring that attenuates the generation of reactive oxygen species and preserves the integrity of Krebs cycle required for persistent production of itaconate and subsequent GATA3-dependent differentiation of inflammation-resolving alternatively activated macrophages. In quiescent endothelia the uncleaved form is constitutively and abundantly expressed, and acts as a chromatin-associated nuclear factor with transcriptional repressor properties, it may sequester nuclear NF-kappaB/RELA, lowering expression of its targets. This form is rapidely lost upon angiogenic or pro-inflammatory activation. The chain is Interleukin-33 (IL33) from Canis lupus familiaris (Dog).